The sequence spans 801 residues: MVVPACVLVFCVAVVAGATSEPPGPEQRVVRRAAEVPGPEPSQQEQVAFGSGDTVELSCHPPGGAPTGPTVWAKDGTGLVASHRILVGPQRLQVLNASHEDAGVYSCQHRLTRRVLCHFSVRVTDAPSSGDDEDGEDVAEDTGAPYWTRPERMDKKLLAVPAANTVRFRCPAAGNPTPSISWLKNGKEFRGEHRIGGIKLRHQQWSLVMESVVPSDRGNYTCVVENKFGSIRQTYTLDVLERSPHRPILQAGLPANQTAILGSDVEFHCKVYSDAQPHIQWLKHVEVNGSKVGPDGTPYVTVLKTAGANTTDKELEVLSLHNVTFEDAGEYTCLAGNSIGFSHHSAWLVVLPAEEELMETDEAGSVYAGVLSYGVVFFLFILVVAAVILCRLRSPPKKGLGSPTVHKVSRFPLKRQVSLESNSSMNSNTPLVRIARLSSGEGPVLANVSELELPADPKWELSRTRLTLGKPLGEGCFGQVVMAEAIGIDKDRTAKPVTVAVKMLKDDATDKDLSDLVSEMEMMKMIGKHKNIINLLGACTQGGPLYVLVEYAAKGNLREFLRARRPPGMDYSFDACRLPEEQLTCKDLVSCAYQVARGMEYLASQKCIHRDLAARNVLVTEDNVMKIADFGLARDVHNLDYYKKTTNGRLPVKWMAPEALFDRVYTHQSDVWSFGVLLWEIFTPGGPSPYPGIPVEELFKLLKEGHRMDKPASCTHDLYMIMRECWHAVPSQRPTFKQLVEDLDRILTVTSTDEYLDLSVPFEQYSPGGQDTPSSSSSGDDSVFTHDLLPPGPPSNGGPRT.

The N-terminal stretch at Met-1–Ser-20 is a signal peptide. At Glu-21–Gly-369 the chain is on the extracellular side. Residues Pro-22–Thr-124 form the Ig-like C2-type 1 domain. A disulfide bond links Cys-59 and Cys-107. N-linked (GlcNAc...) asparagine glycosylation occurs at Asn-96. The disordered stretch occupies residues Asp-125–Tyr-146. The span at Gly-130 to Glu-140 shows a compositional bias: acidic residues. Ig-like C2-type domains lie at Pro-145–Asp-238 and Pro-247–Val-349. Cys-170 and Cys-222 are oxidised to a cystine. N-linked (GlcNAc...) asparagine glycans are attached at residues Asn-219, Asn-256, Asn-288, Asn-309, and Asn-322. The cysteines at positions 269 and 333 are disulfide-linked. Residues Val-370–Cys-390 form a helical membrane-spanning segment. Residues Arg-391–Thr-801 are Cytoplasmic-facing. A phosphoserine mark is found at Ser-438 and Ser-439. One can recognise a Protein kinase domain in the interval Leu-466–Leu-756. ATP contacts are provided by residues Leu-472–Val-480 and Lys-502. Asp-611 (proton acceptor) is an active-site residue. Residues Tyr-641, Tyr-642, Tyr-719, and Tyr-755 each carry the phosphotyrosine; by autocatalysis modification. Residues Phe-762–Thr-801 are disordered. Over residues Ser-766–Ser-782 the composition is skewed to low complexity. The segment covering Pro-790–Thr-801 has biased composition (pro residues).

It belongs to the protein kinase superfamily. Tyr protein kinase family. Fibroblast growth factor receptor subfamily. As to quaternary structure, monomer. Homodimer after ligand binding. Interacts with FGF1, FGF2, FGF4, FGF6; FGF8, FGF9, FGF10, FGF17, FGF18, FGF19, FGF20 and FGF23 (in vitro). Interacts with KLB. Affinity for fibroblast growth factors (FGFs) is increased by heparan sulfate glycosaminoglycans that function as coreceptors. Likewise, KLB increases the affinity for FGF19 and FGF21. Interacts with PIK3R1, PLCG1, SOCS1 and SOCS3. Autophosphorylated. Binding of FGF family members together with heparan sulfate proteoglycan or heparin promotes receptor dimerization and autophosphorylation on tyrosine residues. Autophosphorylation occurs in trans between the two FGFR molecules present in the dimer. Phosphorylation at Tyr-719 is essential for stimulation of cell proliferation and activation of PIK3R1, STAT1 and MAP kinase signaling. Phosphorylation at Tyr-755 is required for interaction with PIK3R1 and PLCG1. In terms of processing, ubiquitinated. Is rapidly ubiquitinated after ligand binding and autophosphorylation, leading to receptor internalization and degradation. Subject to both proteasomal and lysosomal degradation. Post-translationally, N-glycosylated in the endoplasmic reticulum. The N-glycan chains undergo further maturation to an Endo H-resistant form in the Golgi apparatus. In terms of tissue distribution, in embryo, expressed in heart, lung, kidney, skin, head and liver but not in muscle. In adult, highest levels in brain. Also expressed in liver, lung, kidney, testis, ovary and uterus. Very low levels in heart, thymus, spleen and muscle.

The protein resides in the cell membrane. The protein localises to the cytoplasmic vesicle. Its subcellular location is the endoplasmic reticulum. The enzyme catalyses L-tyrosyl-[protein] + ATP = O-phospho-L-tyrosyl-[protein] + ADP + H(+). Present in an inactive conformation in the absence of bound ligand. Ligand binding leads to dimerization and activation by autophosphorylation on tyrosine residues. Tyrosine-protein kinase that acts as a cell-surface receptor for fibroblast growth factors and plays an essential role in the regulation of cell proliferation, differentiation and apoptosis. Plays an essential role in the regulation of chondrocyte differentiation, proliferation and apoptosis, and is required for normal skeleton development. Regulates both osteogenesis and postnatal bone mineralization by osteoblasts. Promotes apoptosis in chondrocytes, but can also promote cancer cell proliferation. Required for normal development of the inner ear. Phosphorylates PLCG1, CBL and FRS2. Ligand binding leads to the activation of several signaling cascades. Activation of PLCG1 leads to the production of the cellular signaling molecules diacylglycerol and inositol 1,4,5-trisphosphate. Phosphorylation of FRS2 triggers recruitment of GRB2, GAB1, PIK3R1 and SOS1, and mediates activation of RAS, MAPK1/ERK2, MAPK3/ERK1 and the MAP kinase signaling pathway, as well as of the AKT1 signaling pathway. Plays a role in the regulation of vitamin D metabolism. Mutations that lead to constitutive kinase activation or impair normal FGFR3 maturation, internalization and degradation lead to aberrant signaling. Over-expressed or constitutively activated FGFR3 promotes activation of STAT1, STAT5A and STAT5B. Plays a role in postnatal lung development. This is Fibroblast growth factor receptor 3 (Fgfr3) from Mus musculus (Mouse).